Reading from the N-terminus, the 131-residue chain is Large ribosomal subunit protein uL18 (131 aa).

It belongs to the universal ribosomal protein uL18 family. In terms of assembly, part of the 50S ribosomal subunit; part of the 5S rRNA/L5/L18/L25 subcomplex. Contacts the 5S and 23S rRNAs.

In terms of biological role, this is one of the proteins that bind and probably mediate the attachment of the 5S RNA into the large ribosomal subunit, where it forms part of the central protuberance. This Corynebacterium kroppenstedtii (strain DSM 44385 / JCM 11950 / CIP 105744 / CCUG 35717) protein is Large ribosomal subunit protein uL18.